A 228-amino-acid chain; its full sequence is L-ribulose-5-phosphate 4-epimerase UlaF (228 aa).

Residues 26–27, 43–44, and 72–73 each bind substrate; these read GN, SG, and SS. Zn(2+)-binding residues include D74, H93, and H95. The Proton donor/acceptor role is filled by D118. H167 lines the Zn(2+) pocket. The active-site Proton donor/acceptor is Y225.

Belongs to the aldolase class II family. AraD/FucA subfamily. It depends on Zn(2+) as a cofactor.

The catalysed reaction is L-ribulose 5-phosphate = D-xylulose 5-phosphate. It functions in the pathway cofactor degradation; L-ascorbate degradation; D-xylulose 5-phosphate from L-ascorbate: step 4/4. Its function is as follows. Catalyzes the isomerization of L-ribulose 5-phosphate to D-xylulose 5-phosphate. Is involved in the anaerobic L-ascorbate utilization. This chain is L-ribulose-5-phosphate 4-epimerase UlaF, found in Escherichia coli O17:K52:H18 (strain UMN026 / ExPEC).